We begin with the raw amino-acid sequence, 799 residues long: Signal transducer and activator of transcription 5A (799 aa).

Tyr-90 carries the post-translational modification Phosphotyrosine. A Phosphoserine modification is found at Ser-128. The SH2 domain occupies 589 to 686 (WNDGAILGFV…EVFSKYYTPV (98 aa)). Phosphotyrosine is present on Tyr-682. Phosphotyrosine; by JAK2 is present on Tyr-699. A disordered region spans residues 778 to 799 (DSLDPRLSPPAGLFASTRGSLS). A Phosphoserine modification is found at Ser-785.

It belongs to the transcription factor STAT family. As to quaternary structure, forms a homodimer or a heterodimer with a related family member. Binds NR3C1. Interacts with NCOA1 and SOCS7. Interacts with ERBB4. Interacts with EBF4. Interacts with CD69. Post-translationally, ISGylated. In terms of processing, tyrosine phosphorylated in response to KITLG/SCF, IL2, IL3, IL7, IL15, CSF2/GMCSF, GH1, PRL, EPO and THPO. Activated KIT promotes phosphorylation on tyrosine residues and subsequent translocation to the nucleus. Tyrosine phosphorylated in response to constitutively activated FGFR1, FGFR2, FGFR3 and FGFR4. Tyrosine phosphorylation is required for DNA-binding activity and dimerization. Serine phosphorylation is also required for maximal transcriptional activity. Tyrosine phosphorylated in response to signaling via activated FLT3; wild-type FLT3 results in much weaker phosphorylation than constitutively activated mutant FLT3. Alternatively, can be phosphorylated by JAK2 at Tyr-699.

It localises to the cytoplasm. The protein resides in the nucleus. Carries out a dual function: signal transduction and activation of transcription. Mediates cellular responses to the cytokine KITLG/SCF and other growth factors. May mediate cellular responses to activated FGFR1, FGFR2, FGFR3 and FGFR4. Binds to the GAS element and activates PRL-induced transcription. Regulates the expression of milk proteins during lactation. In Sus scrofa (Pig), this protein is Signal transducer and activator of transcription 5A (STAT5A).